The primary structure comprises 95 residues: Gas vesicle protein S (95 aa).

This sequence belongs to the gas vesicle GvpA family.

It is found in the gas vesicle. Its function is as follows. Probably a minor component of the gas vesicle. It is not clear what function gas vesicles perform in soil bacteria. When a minimal gvp locus (gvpA2-gvpR-gvpN-gvpF-gvpG-gvpL-gvpS-gvpK-gvpJ-gvpT-gvpU, called pNL29) is expressed in E.coli gas vesicles are made. This Priestia megaterium (Bacillus megaterium) protein is Gas vesicle protein S.